The chain runs to 537 residues: Cytochrome bd ubiquinol oxidase subunit 1 (537 aa).

Topologically, residues 1 to 24 are cytoplasmic; that stretch reads MISESVVDLSRLQFAMTALYHFLF. His-21 is a heme b binding site. The chain crosses the membrane as a helical span at residues 25 to 44; sequence VPLTLGMTFLLAIMESVYVM. The Periplasmic segment spans residues 45 to 96; it reads TGKQVYKDMVKFWGKLFGINFALGVTTGITMEFQFGTNWAYYSHYVGDIFGA. A helical membrane pass occupies residues 97 to 116; it reads PLAIEGLTAFFLESTFIGMF. Residues 117 to 131 lie on the Cytoplasmic side of the membrane; the sequence is FFGWDRLSKIQHLAV. Residues 132–151 traverse the membrane as a helical segment; that stretch reads TWLVALGSNLSALWILVANG. Residues 152–189 lie on the Periplasmic side of the membrane; that stretch reads WMQHPVGAEFNFETMRMELVDFGALLLNPVAQVKFVHT. A heme b-binding site is contributed by His-188. The helical transmembrane segment at 190 to 209 threads the bilayer; the sequence is VASGYVTGAVFVLAISSYYL. At 210–221 the chain is on the cytoplasmic side; sequence LKKRDLGFARRS. Residues 222 to 241 form a helical membrane-spanning segment; that stretch reads FAIASAFGMASILSVIVLGD. The Periplasmic segment spans residues 242–394; it reads ESGYEVGEVQ…VASMFWSFRA (153 aa). Met-395 contributes to the heme b binding site. The chain crosses the membrane as a helical span at residues 395–414; sequence MVGAGFAMLILFVCAFWASA. The Cytoplasmic segment spans residues 415-472; that stretch reads RKNEESKPWLLKFALYSLPLPWIATQTGWFVAEHGRQPWTIGGVLPTHLSASSLSTGD. A helical transmembrane segment spans residues 473-492; that stretch reads LWGSLIALIAFYTLLLVVEM. Residues 493–537 are Periplasmic-facing; it reads YLMIRFARLGPSSLHTGRYHFEQLEQHAVKHASPSQADPQQPVNA.

This sequence belongs to the cytochrome ubiquinol oxidase subunit 1 family. As to quaternary structure, heterodimer of subunits I and II. The cofactor is heme b. Heme d cis-diol is required as a cofactor.

The protein resides in the cell inner membrane. It carries out the reaction 2 a ubiquinol + O2(in) + 4 H(+)(in) = 2 a ubiquinone + 2 H2O(in) + 4 H(+)(out). Functionally, may be involved in maintaining the low intracellular oxygen concentration required for nitrogen fixation. The protein is Cytochrome bd ubiquinol oxidase subunit 1 (cydA) of Azotobacter vinelandii.